Here is a 422-residue protein sequence, read N- to C-terminus: L-2-hydroxyglutarate dehydrogenase (422 aa).

This sequence belongs to the L2HGDH family. FAD serves as cofactor.

It localises to the cell inner membrane. The catalysed reaction is (S)-2-hydroxyglutarate + a quinone = a quinol + 2-oxoglutarate. It functions in the pathway amino-acid degradation. Its function is as follows. Catalyzes the dehydrogenation of L-2-hydroxyglutarate (L2HG) to alpha-ketoglutarate and couples to the respiratory chain by feeding electrons from the reaction into the membrane quinone pool. Functions in a L-lysine degradation pathway that proceeds via cadaverine, glutarate and L-2-hydroxyglutarate. The polypeptide is L-2-hydroxyglutarate dehydrogenase (Escherichia coli (strain K12)).